A 196-amino-acid polypeptide reads, in one-letter code: Ribonuclease HII (196 aa).

Residues M1–L196 form the RNase H type-2 domain. A divalent metal cation-binding residues include D7, E8, and D103.

The protein belongs to the RNase HII family. Mn(2+) is required as a cofactor. Mg(2+) serves as cofactor.

The protein localises to the cytoplasm. It catalyses the reaction Endonucleolytic cleavage to 5'-phosphomonoester.. In terms of biological role, endonuclease that specifically degrades the RNA of RNA-DNA hybrids. This chain is Ribonuclease HII, found in Novosphingobium aromaticivorans (strain ATCC 700278 / DSM 12444 / CCUG 56034 / CIP 105152 / NBRC 16084 / F199).